We begin with the raw amino-acid sequence, 750 residues long: Photosystem I P700 chlorophyll a apoprotein A1 (750 aa).

The next 8 membrane-spanning stretches (helical) occupy residues 70–93 (VFSA…FHGA), 156–179 (LYCT…FHYH), 195–219 (LNHH…HVSL), 291–309 (IAHH…GHMY), 346–369 (WHAQ…HHMY), 385–411 (LSLF…IFMV), 433–455 (AIIS…LYIH), and 531–549 (FLVH…LILL). Residues cysteine 573 and cysteine 582 each coordinate [4Fe-4S] cluster. Transmembrane regions (helical) follow at residues 589 to 610 (HVFL…HFSW) and 664 to 686 (LSAY…MFLF). Residue histidine 675 coordinates chlorophyll a'. Residues methionine 683 and tyrosine 691 each contribute to the chlorophyll a site. Tryptophan 692 is a binding site for phylloquinone. A helical transmembrane segment spans residues 724–744 (AVGVTHYLLGGIATTWAFFLA).

It belongs to the PsaA/PsaB family. In terms of assembly, the PsaA/B heterodimer binds the P700 chlorophyll special pair and subsequent electron acceptors. PSI consists of a core antenna complex that captures photons, and an electron transfer chain that converts photonic excitation into a charge separation. The eukaryotic PSI reaction center is composed of at least 11 subunits. The cofactor is P700 is a chlorophyll a/chlorophyll a' dimer, A0 is one or more chlorophyll a, A1 is one or both phylloquinones and FX is a shared 4Fe-4S iron-sulfur center..

The protein resides in the plastid. The protein localises to the chloroplast thylakoid membrane. The catalysed reaction is reduced [plastocyanin] + hnu + oxidized [2Fe-2S]-[ferredoxin] = oxidized [plastocyanin] + reduced [2Fe-2S]-[ferredoxin]. PsaA and PsaB bind P700, the primary electron donor of photosystem I (PSI), as well as the electron acceptors A0, A1 and FX. PSI is a plastocyanin-ferredoxin oxidoreductase, converting photonic excitation into a charge separation, which transfers an electron from the donor P700 chlorophyll pair to the spectroscopically characterized acceptors A0, A1, FX, FA and FB in turn. Oxidized P700 is reduced on the lumenal side of the thylakoid membrane by plastocyanin. This Liriodendron tulipifera (Tuliptree) protein is Photosystem I P700 chlorophyll a apoprotein A1.